The following is a 194-amino-acid chain: 13S globulin basic chain (194 aa).

The region spanning 13–162 (ENIKSPQEAD…SFQISSEEAE (150 aa)) is the Cupin type-1 domain.

The protein belongs to the 11S seed storage protein (globulins) family. As to quaternary structure, hexamer; each subunit is composed of an acidic and a basic chain derived from a single precursor and linked by a disulfide bond. Cotyledons and endosperm protein bodies.

Its function is as follows. Seed storage protein with a relatively high level of Lys and Met. The sequence is that of 13S globulin basic chain from Fagopyrum esculentum (Common buckwheat).